The sequence spans 461 residues: Phosphoglucosamine mutase (461 aa).

Ser107 (phosphoserine intermediate) is an active-site residue. Mg(2+) contacts are provided by Ser107, Asp254, Asp256, and Asp258. A Phosphoserine modification is found at Ser107.

It belongs to the phosphohexose mutase family. The cofactor is Mg(2+). In terms of processing, activated by phosphorylation.

The catalysed reaction is alpha-D-glucosamine 1-phosphate = D-glucosamine 6-phosphate. Catalyzes the conversion of glucosamine-6-phosphate to glucosamine-1-phosphate. This Bifidobacterium longum (strain DJO10A) protein is Phosphoglucosamine mutase.